The primary structure comprises 293 residues: Cytidine deaminase (293 aa).

CMP/dCMP-type deaminase domains lie at 47–166 and 186–293; these read EDRA…FGPA and ESED…YQAV. 88–90 serves as a coordination point for substrate; that stretch reads NME. Residue His101 participates in Zn(2+) binding. Glu103 (proton donor) is an active-site residue. Positions 128 and 131 each coordinate Zn(2+).

Belongs to the cytidine and deoxycytidylate deaminase family. In terms of assembly, homodimer. Zn(2+) is required as a cofactor.

The catalysed reaction is cytidine + H2O + H(+) = uridine + NH4(+). The enzyme catalyses 2'-deoxycytidine + H2O + H(+) = 2'-deoxyuridine + NH4(+). Its function is as follows. This enzyme scavenges exogenous and endogenous cytidine and 2'-deoxycytidine for UMP synthesis. The protein is Cytidine deaminase of Aeromonas salmonicida (strain A449).